A 567-amino-acid polypeptide reads, in one-letter code: Urease subunit alpha (567 aa).

Residues 129-567 (GGIDSHIHFI…LPMAQRYFLF (439 aa)) form the Urease domain. Residues His-134, His-136, and Lys-217 each contribute to the Ni(2+) site. N6-carboxylysine is present on Lys-217. Residue His-219 participates in substrate binding. Ni(2+) contacts are provided by His-246 and His-272. The Proton donor role is filled by His-320. Asp-360 is a Ni(2+) binding site.

This sequence belongs to the metallo-dependent hydrolases superfamily. Urease alpha subunit family. Heterotrimer of UreA (gamma), UreB (beta) and UreC (alpha) subunits. Three heterotrimers associate to form the active enzyme. The cofactor is Ni cation. Carboxylation allows a single lysine to coordinate two nickel ions.

The protein resides in the cytoplasm. It carries out the reaction urea + 2 H2O + H(+) = hydrogencarbonate + 2 NH4(+). Its pathway is nitrogen metabolism; urea degradation; CO(2) and NH(3) from urea (urease route): step 1/1. The polypeptide is Urease subunit alpha (Tolumonas auensis (strain DSM 9187 / NBRC 110442 / TA 4)).